A 158-amino-acid chain; its full sequence is uncharacterized protein (158 aa).

Residues 1-18 (MDLASEITSATQTSSLCS) show a composition bias toward polar residues. Disordered stretches follow at residues 1-20 (MDLA…CSSG), 66-94 (LRDL…KPCL), and 111-158 (GSSG…GEEF). The segment covering 72–90 (RGSTSSSRSPSRPVSTSAS) has biased composition (low complexity). 2 stretches are compositionally biased toward polar residues: residues 111-120 (GSSGHLQSPG) and 149-158 (LSHSAQGEEF).

This is an uncharacterized protein from Homo sapiens (Human).